Reading from the N-terminus, the 300-residue chain is MSATLIDGKAFAARVRAQVAEHVTRLKADHGITPGLAVVLVGQDPASQVYVRSKGKQTTEVGMKSVEHKLDADTSETDLLAVVDQLNKDPDIHGILVQLPLPGHLDEDLVINSIAPEKDVDGFHISNVGLLGTGQKSMVPCTPLGCLMMLRDYHGSLLGMDAVVVGRSNIVGKPMAQLLLGDSCTVTIAHSRTKDLADVVRRADIVVAAVGRPEMVPGDWIKPGATVIDVGINRLDAPEKGEGKTRLVGDVDFDSCAAVAGAITPVPGGVGPMTIACLLANTVTACCRANGLEEPEGLTA.

NADP(+) contacts are provided by residues 166-168 (GRS), serine 191, and isoleucine 232.

Belongs to the tetrahydrofolate dehydrogenase/cyclohydrolase family. Homodimer.

The enzyme catalyses (6R)-5,10-methylene-5,6,7,8-tetrahydrofolate + NADP(+) = (6R)-5,10-methenyltetrahydrofolate + NADPH. It catalyses the reaction (6R)-5,10-methenyltetrahydrofolate + H2O = (6R)-10-formyltetrahydrofolate + H(+). It participates in one-carbon metabolism; tetrahydrofolate interconversion. Its function is as follows. Catalyzes the oxidation of 5,10-methylenetetrahydrofolate to 5,10-methenyltetrahydrofolate and then the hydrolysis of 5,10-methenyltetrahydrofolate to 10-formyltetrahydrofolate. The polypeptide is Bifunctional protein FolD 1 (Roseobacter denitrificans (strain ATCC 33942 / OCh 114) (Erythrobacter sp. (strain OCh 114))).